Consider the following 197-residue polypeptide: Secreted RxLR effector protein 48 (197 aa).

An N-terminal signal peptide occupies residues 1-27 (MCCVSWNWVLACTFLLIFLSWWNCCND). The RxLR-dEER motif lies at 58–79 (RLLRVNLAANAEVLTHEIEEEK).

Belongs to the RxLR effector family.

It is found in the secreted. It localises to the host nucleus. Its subcellular location is the host cytoplasm. Secreted effector that completely suppresses the host cell death induced by cell death-inducing proteins. The sequence is that of Secreted RxLR effector protein 48 from Plasmopara viticola (Downy mildew of grapevine).